The sequence spans 394 residues: 1-deoxy-D-xylulose 5-phosphate reductoisomerase (394 aa).

NADPH contacts are provided by T12, G13, S14, I15, G38, and N126. K127 serves as a coordination point for 1-deoxy-D-xylulose 5-phosphate. NADPH is bound at residue E128. D151 is a Mn(2+) binding site. 1-deoxy-D-xylulose 5-phosphate-binding residues include S152, E153, S177, and H200. Residue E153 participates in Mn(2+) binding. G206 serves as a coordination point for NADPH. 1-deoxy-D-xylulose 5-phosphate is bound by residues S213, N218, K219, and E222. E222 provides a ligand contact to Mn(2+).

This sequence belongs to the DXR family. It depends on Mg(2+) as a cofactor. Mn(2+) is required as a cofactor.

The catalysed reaction is 2-C-methyl-D-erythritol 4-phosphate + NADP(+) = 1-deoxy-D-xylulose 5-phosphate + NADPH + H(+). The protein operates within isoprenoid biosynthesis; isopentenyl diphosphate biosynthesis via DXP pathway; isopentenyl diphosphate from 1-deoxy-D-xylulose 5-phosphate: step 1/6. Its function is as follows. Catalyzes the NADPH-dependent rearrangement and reduction of 1-deoxy-D-xylulose-5-phosphate (DXP) to 2-C-methyl-D-erythritol 4-phosphate (MEP). This chain is 1-deoxy-D-xylulose 5-phosphate reductoisomerase, found in Beutenbergia cavernae (strain ATCC BAA-8 / DSM 12333 / CCUG 43141 / JCM 11478 / NBRC 16432 / NCIMB 13614 / HKI 0122).